The primary structure comprises 279 residues: Eukaryotic translation initiation factor 3 subunit J (279 aa).

2 disordered regions span residues Met-1–Ser-74 and Glu-229–Met-279. Residues Trp-20 to Glu-39 are compositionally biased toward acidic residues. Residues Asp-34–Ser-74 are a coiled coil. Basic and acidic residues predominate over residues Val-40 to Asn-67. Residues Asp-268–Met-279 show a composition bias toward acidic residues.

It belongs to the eIF-3 subunit J family. As to quaternary structure, component of the eukaryotic translation initiation factor 3 (eIF-3) complex.

The protein localises to the cytoplasm. Component of the eukaryotic translation initiation factor 3 (eIF-3) complex, which is involved in protein synthesis of a specialized repertoire of mRNAs and, together with other initiation factors, stimulates binding of mRNA and methionyl-tRNAi to the 40S ribosome. The eIF-3 complex specifically targets and initiates translation of a subset of mRNAs involved in cell proliferation. The chain is Eukaryotic translation initiation factor 3 subunit J from Meyerozyma guilliermondii (strain ATCC 6260 / CBS 566 / DSM 6381 / JCM 1539 / NBRC 10279 / NRRL Y-324) (Yeast).